The primary structure comprises 90 residues: Small ribosomal subunit protein uS15 (90 aa).

The protein belongs to the universal ribosomal protein uS15 family. In terms of assembly, part of the 30S ribosomal subunit. Forms a bridge to the 50S subunit in the 70S ribosome, contacting the 23S rRNA.

Its function is as follows. One of the primary rRNA binding proteins, it binds directly to 16S rRNA where it helps nucleate assembly of the platform of the 30S subunit by binding and bridging several RNA helices of the 16S rRNA. Functionally, forms an intersubunit bridge (bridge B4) with the 23S rRNA of the 50S subunit in the ribosome. This is Small ribosomal subunit protein uS15 from Thermotoga maritima (strain ATCC 43589 / DSM 3109 / JCM 10099 / NBRC 100826 / MSB8).